A 291-amino-acid polypeptide reads, in one-letter code: MIKYSFLLTALVLFLRALKLEAGDIVIYWGQNGNEGSLADTCATNNYAIVNIAFLVVFGNGQNPVLNLAGHCDPNAGACTGLSNDIRACQNQGIKVMLSLGGGAGSYFLSSADDARNVANYLWNNYLGGQSNTRPLGDAVLDGIDFDIEGGTTQHWDELAKTLSQFSQQRKVYLTAAPQCPFPDTWLNGALSTGLFDYVWVQFYNNPPCQYSGGSADNLKNYWNQWNAIQAGKIFLGLPAAQGAAGSGFIPSDVLVSQVLPLINGSPKYGGVMLWSKFYDNGYSSAIKANV.

Residues 1-22 (MIKYSFLLTALVLFLRALKLEA) form the signal peptide. The 269-residue stretch at 23–291 (GDIVIYWGQN…GYSSAIKANV (269 aa)) folds into the GH18 domain. 2 cysteine pairs are disulfide-bonded: cysteine 42/cysteine 89 and cysteine 72/cysteine 79. Glutamate 149 acts as the Proton donor in catalysis. A disulfide bond links cysteine 180 and cysteine 209.

It belongs to the glycosyl hydrolase 18 family. Chitinase class II subfamily.

Its subcellular location is the secreted. The protein resides in the cell wall. It catalyses the reaction Random endo-hydrolysis of N-acetyl-beta-D-glucosaminide (1-&gt;4)-beta-linkages in chitin and chitodextrins.. Its function is as follows. This protein functions as a defense against chitin containing fungal pathogens. The sequence is that of Acidic endochitinase from Nicotiana tabacum (Common tobacco).